The sequence spans 517 residues: Ubiquitin carboxyl-terminal hydrolase 30 (517 aa).

Over 1 to 35 (MLSSRAEAAMTAADRAIQRFLRTGAAVRYKVMKNW) the chain is Mitochondrial intermembrane. The helical transmembrane segment at 36–56 (GVIGGIAAALAAGIYVIWGPI) threads the bilayer. The Cytoplasmic segment spans residues 57-517 (TERKKRRKGL…HQSQECKSEE (461 aa)). A USP domain is found at 68–502 (PGLVNLGNTC…SAYLLFYERV (435 aa)). Catalysis depends on C77, which acts as the Nucleophile. Glycyl lysine isopeptide (Lys-Gly) (interchain with G-Cter in ubiquitin) cross-links involve residues K235 and K289. The tract at residues 364–395 (SQHNPKLNKNPGPTLELQDGPGAPTPVLNQPG) is disordered. H452 acts as the Proton acceptor in catalysis.

Belongs to the peptidase C19 family. Post-translationally, ubiquitinated by parkin (PRKN) at Lys-235 and Lys-289, leading to its degradation. In terms of tissue distribution, expressed in skeletal muscle, pancreas, liver and kidney.

It is found in the mitochondrion outer membrane. It catalyses the reaction Thiol-dependent hydrolysis of ester, thioester, amide, peptide and isopeptide bonds formed by the C-terminal Gly of ubiquitin (a 76-residue protein attached to proteins as an intracellular targeting signal).. Inhibited by the diterpenoid derivative 15-oxospiramilactone (S3). In terms of biological role, deubiquitinating enzyme tethered to the mitochondrial outer membrane that acts as a key inhibitor of mitophagy by counteracting the action of parkin (PRKN): hydrolyzes ubiquitin attached by parkin on target proteins, such as RHOT1/MIRO1 and TOMM20, thereby blocking parkin's ability to drive mitophagy. Preferentially cleaves 'Lys-6'- and 'Lys-11'-linked polyubiquitin chains, 2 types of linkage that participate in mitophagic signaling. Does not cleave efficiently polyubiquitin phosphorylated at 'Ser-65'. Acts as a negative regulator of mitochondrial fusion by mediating deubiquitination of MFN1 and MFN2. This Homo sapiens (Human) protein is Ubiquitin carboxyl-terminal hydrolase 30.